A 459-amino-acid chain; its full sequence is Chaperone SurA (459 aa).

A signal peptide spans 1–23 (MNHRLVALSVASLALLAPLTVPA). 2 PpiC domains span residues 197 to 301 (VQQI…KVLE) and 312 to 411 (VTQS…QLME).

It is found in the periplasm. The enzyme catalyses [protein]-peptidylproline (omega=180) = [protein]-peptidylproline (omega=0). Its function is as follows. Chaperone involved in the correct folding and assembly of outer membrane proteins. Recognizes specific patterns of aromatic residues and the orientation of their side chains, which are found more frequently in integral outer membrane proteins. May act in both early periplasmic and late outer membrane-associated steps of protein maturation. The protein is Chaperone SurA of Albidiferax ferrireducens (strain ATCC BAA-621 / DSM 15236 / T118) (Rhodoferax ferrireducens).